A 76-amino-acid chain; its full sequence is Putative snRNP Sm-like protein (76 aa).

Residues 4–76 (RPLDVIHKSL…VLAISPTEEG (73 aa)) enclose the Sm domain.

This sequence belongs to the snRNP Sm proteins family.

The sequence is that of Putative snRNP Sm-like protein from Pyrococcus furiosus (strain ATCC 43587 / DSM 3638 / JCM 8422 / Vc1).